Reading from the N-terminus, the 567-residue chain is Phosphoglucomutase-like protein 5 (567 aa).

The segment at 1-26 (MEGSPIPVLTVPTAPYEDQRPTGGGG) is disordered. Phosphothreonine is present on T120. S122 is subject to Phosphoserine.

Belongs to the phosphohexose mutase family. Interacts with DMD/dystrophin; the interaction is direct. Interacts with UTRN/utrophin.

It localises to the cell junction. The protein localises to the adherens junction. Its subcellular location is the cytoplasm. The protein resides in the cytoskeleton. It is found in the cell membrane. It localises to the sarcolemma. Component of adherens-type cell-cell and cell-matrix junctions. Has no phosphoglucomutase activity in vitro. This chain is Phosphoglucomutase-like protein 5, found in Rattus norvegicus (Rat).